The chain runs to 150 residues: Large ribosomal subunit protein bL9 (150 aa).

Belongs to the bacterial ribosomal protein bL9 family.

Binds to the 23S rRNA. This Methylibium petroleiphilum (strain ATCC BAA-1232 / LMG 22953 / PM1) protein is Large ribosomal subunit protein bL9.